The sequence spans 975 residues: 5'-3' exoribonuclease 2 homolog (975 aa).

Residues 262–279 (RACDLCGQYGHELKECRG) form a CCHC-type zinc finger. Disordered stretches follow at residues 424–443 (MQMY…GRGQ) and 505–532 (SPAD…EGPK). The tract at residues 534–787 (DIRLYESGWK…GICVLYEDPE (254 aa)) is interaction with paxt-1. Positions 804–821 (EPEKTLKPDDWNDRRDGR) are enriched in basic and acidic residues. The segment at 804–975 (EPEKTLKPDD…GGYHGNSSWR (172 aa)) is disordered. Composition is skewed to gly residues over residues 850 to 860 (RGGGGGGGGYR), 886 to 895 (NYGGRDGGGP), and 908 to 932 (GYQG…GGGS).

It belongs to the 5'-3' exonuclease family. XRN2/RAT1 subfamily. As to quaternary structure, interacts with paxt-1 (via N-terminus); the interaction is direct and results in stabilization of xrn-2 in the complex. In terms of tissue distribution, expressed in the pharyngeal myoepithelium and intestine. Also expressed in several anterior neurons including the sensory neurons, as well as the interneuron PVT and the pharyngeal motorneuron M5.

It localises to the nucleus. In terms of biological role, possesses 5'-&gt;3' exoribonuclease activity. Plays a role in maintenance of steady-state concentration and turnover of microRNAs (miRNA) by degradation of mature miRNA. Degradation role is enhanced when in complex with paxt-1. Partially redundant to xrn-1 in miRNA guide strand degradation. Implicated in differential regulation of mRNAs such as let-7 by controlling the accumulation of mature miRNA. Positively regulates molting of the pharyngeal cuticle. The polypeptide is 5'-3' exoribonuclease 2 homolog (Caenorhabditis elegans).